Reading from the N-terminus, the 539-residue chain is MHRRNLLKASMALAAYTGLSASGLLAARAWAGAADGQAQAFDFEQLKAQAKQLAASQYVDTKQVLPPTLAKMTPQNFNAIQYDSKHSLWNELNGQLDVQFFHVGMGFKQPVRMHSVDPKTRQAREVHFRPPLFNYQNTSVDTAQLKGDLGFAGFKLFKAPELDKHDVVSFLGASYFRAVDATGQYGLSARGLAIDTYAKRREEFPDFTQFWFETPDKDSTRFVVYALLDSPSATGAYRFDIDCQAERVVMDVDAHINARTAIEQLGIAPMTSMFSCGTHERRMCDTIHPQIHDSDRLAMWRGNGEWICRPLNNPANLQFNAFADKDPKGFGLVQTDHEFASYQDTVDWYSRRPSLWVEPTTAWGEGSIDLLEIPTTGETLDNIVAFWTPKKPVAAGDSLNYGYKLYWSALPPVGTPLARVHATRSGMGGFVEGWAPGEHYPEVWARRFAVDFTGGGLDRLPAGTGIEPVVTASNGEVKDFNVLVLDEIKGYRITFDWFPTNDSVEPVELRLFIRTNDRTLSETWLYQYFPPAPDKRKYP.

A signal peptide (tat-type signal) is located at residues 1–31 (MHRRNLLKASMALAAYTGLSASGLLAARAWA).

The protein belongs to the OpgD/OpgG family. Predicted to be exported by the Tat system. The position of the signal peptide cleavage has not been experimentally proven.

It is found in the periplasm. It participates in glycan metabolism; osmoregulated periplasmic glucan (OPG) biosynthesis. Functionally, probably involved in the control of the structural glucose backbone of osmoregulated periplasmic glucans (OPGs). The protein is Glucans biosynthesis protein D of Pseudomonas fluorescens (strain ATCC BAA-477 / NRRL B-23932 / Pf-5).